We begin with the raw amino-acid sequence, 209 residues long: Protein GrpE (209 aa).

Polar residues predominate over residues 1–13 (MSNDSSKAKQNQV). The tract at residues 1-27 (MSNDSSKAKQNQVDEAVEGEIITDNEN) is disordered. Residues 15–27 (EAVEGEIITDNEN) are compositionally biased toward acidic residues.

This sequence belongs to the GrpE family. In terms of assembly, homodimer.

The protein localises to the cytoplasm. Participates actively in the response to hyperosmotic and heat shock by preventing the aggregation of stress-denatured proteins, in association with DnaK and GrpE. It is the nucleotide exchange factor for DnaK and may function as a thermosensor. Unfolded proteins bind initially to DnaJ; upon interaction with the DnaJ-bound protein, DnaK hydrolyzes its bound ATP, resulting in the formation of a stable complex. GrpE releases ADP from DnaK; ATP binding to DnaK triggers the release of the substrate protein, thus completing the reaction cycle. Several rounds of ATP-dependent interactions between DnaJ, DnaK and GrpE are required for fully efficient folding. In Shewanella sediminis (strain HAW-EB3), this protein is Protein GrpE.